Here is a 506-residue protein sequence, read N- to C-terminus: tRNA (guanine(6)-N(2))-methyltransferase THUMP3 (506 aa).

The disordered stretch occupies residues 144–172 (KTKRRKLNPNSSKQKIDNGRGDTTVEKDV). Residues 157 to 172 (QKIDNGRGDTTVEKDV) are compositionally biased toward basic and acidic residues. The region spanning 170–286 (KDVKKELTNS…DNEVVVGIAL (117 aa)) is the THUMP domain.

It belongs to the methyltransferase superfamily. In terms of assembly, part of the heterodimeric THUMPD3-TRM112 methyltransferase complex; this complex forms an active tRNA methyltransferase, where TRMT112 acts as an activator of the catalytic subunit THUMPD3.

The protein resides in the cytoplasm. It carries out the reaction guanosine(6) in tRNA + S-adenosyl-L-methionine = N(2)-methylguanosine(6) in tRNA + S-adenosyl-L-homocysteine + H(+). The catalysed reaction is guanosine(7) in tRNA + S-adenosyl-L-methionine = N(2)-methylguanosine(7) in tRNA + S-adenosyl-L-homocysteine + H(+). Functionally, catalytic subunit of the THUMPD3-TRM112 methyltransferase complex, that specifically mediates the S-adenosyl-L-methionine-dependent N(2)-methylation of guanosine nucleotide at position 6 (m2G6) in tRNAs. This is one of the major tRNA (guanine-N(2))-methyltransferases. Also catalyzes the S-adenosyl-L-methionine-dependent N(2)-methylation of guanosine nucleotide at position 7 of tRNA(Trp). This chain is tRNA (guanine(6)-N(2))-methyltransferase THUMP3, found in Bos taurus (Bovine).